The chain runs to 360 residues: GTPase Obg (360 aa).

An Obg domain is found at 1 to 156 (MFVDSVEIII…KCVRLELKLI (156 aa)). The region spanning 157-360 (ADIGLVGFPN…LKFVLLEALP (204 aa)) is the OBG-type G domain. GTP is bound by residues 163 to 170 (GFPNAGKS), 188 to 192 (FTTLV), 210 to 213 (DIPG), 279 to 282 (NKCD), and 341 to 343 (SAL). Positions 170 and 190 each coordinate Mg(2+).

The protein belongs to the TRAFAC class OBG-HflX-like GTPase superfamily. OBG GTPase family. As to quaternary structure, monomer. Mg(2+) serves as cofactor.

It localises to the cytoplasm. Functionally, an essential GTPase which binds GTP, GDP and possibly (p)ppGpp with moderate affinity, with high nucleotide exchange rates and a fairly low GTP hydrolysis rate. Plays a role in control of the cell cycle, stress response, ribosome biogenesis and in those bacteria that undergo differentiation, in morphogenesis control. In Helicobacter pylori (strain Shi470), this protein is GTPase Obg.